The primary structure comprises 166 residues: Signal peptidase complex catalytic subunit SEC11 (166 aa).

Residues 1-9 are Cytoplasmic-facing; that stretch reads MNIRQQLTQ. A helical; Signal-anchor for type II membrane protein membrane pass occupies residues 10-30; that stretch reads FLSLAYVFTSAFVIWKSLGII. Residues 31 to 166 lie on the Lumenal side of the membrane; the sequence is TNSHSPIVVV…MCISTLLTNE (136 aa). Active-site charge relay system residues include serine 44, histidine 83, and aspartate 108. The tract at residues 152–163 is C-terminal short (CTS) helix; that stretch reads GMLGLMCISTLL.

It belongs to the peptidase S26B family. As to quaternary structure, component of the signal peptidase complex (SPC) composed of a catalytic subunit SEC11 and three accessory subunits SPC1, SPC2 and SPC3. The complex induces a local thinning of the ER membrane which is used to measure the length of the signal peptide (SP) h-region of protein substrates. This ensures the selectivity of the complex towards h-regions shorter than 18-20 amino acids. SPC associates with the translocon complex.

The protein localises to the endoplasmic reticulum membrane. It carries out the reaction Cleavage of hydrophobic, N-terminal signal or leader sequences from secreted and periplasmic proteins.. Its function is as follows. Catalytic component of the signal peptidase complex (SPC) which catalyzes the cleavage of N-terminal signal sequences from nascent proteins as they are translocated into the lumen of the endoplasmic reticulum. Specifically cleaves N-terminal signal peptides that contain a hydrophobic alpha-helix (h-region) shorter than 18-20 amino acids. The chain is Signal peptidase complex catalytic subunit SEC11 (SEC11) from Scheffersomyces stipitis (strain ATCC 58785 / CBS 6054 / NBRC 10063 / NRRL Y-11545) (Yeast).